We begin with the raw amino-acid sequence, 264 residues long: Small ribosomal subunit protein uS2 (264 aa).

Belongs to the universal ribosomal protein uS2 family.

This chain is Small ribosomal subunit protein uS2, found in Helicobacter pylori (strain Shi470).